The primary structure comprises 294 residues: Probable 2-(5''-triphosphoribosyl)-3'-dephosphocoenzyme-A synthase (294 aa).

The protein belongs to the CitG/MdcB family.

It catalyses the reaction 3'-dephospho-CoA + ATP = 2'-(5''-triphospho-alpha-D-ribosyl)-3'-dephospho-CoA + adenine. This Streptococcus pyogenes serotype M2 (strain MGAS10270) protein is Probable 2-(5''-triphosphoribosyl)-3'-dephosphocoenzyme-A synthase.